The chain runs to 370 residues: DNA replication and repair protein RecF (370 aa).

ATP is bound at residue 30-37 (GENAQGKT).

It belongs to the RecF family.

It is found in the cytoplasm. In terms of biological role, the RecF protein is involved in DNA metabolism; it is required for DNA replication and normal SOS inducibility. RecF binds preferentially to single-stranded, linear DNA. It also seems to bind ATP. This is DNA replication and repair protein RecF from Staphylococcus aureus (strain USA300).